Consider the following 224-residue polypeptide: MNTIDWEFMISAFPTLIQALPITLFMAIAAMIFAIIGGLILALITKNKIPVLHQLSKLYISFFRGVPTLVQLFLIYYGLPQLFPEMSKMTALTAAIIGLSLKNAAYLAEIFRAALNSVDDGQLEACLSVGMTKFQAYRRIILPQAIRNAIPATGNTFIGLLKETSLAFTLGVMEMFAQGKMYASGNLKYFETYLAVAIVYWVLTIIYSILQDLFERAMSKPYRT.

6 helical membrane-spanning segments follow: residues 3-23 (TIDW…LPIT), 24-44 (LFMA…LALI), 58-78 (LYIS…IYYG), 91-111 (ALTA…AEIF), 157-177 (FIGL…EMFA), and 190-210 (FETY…YSIL). The region spanning 20-211 (LPITLFMAIA…VLTIIYSILQ (192 aa)) is the ABC transmembrane type-1 domain.

Belongs to the binding-protein-dependent transport system permease family. As to quaternary structure, the complex is composed of two ATP-binding proteins (YxeO), two transmembrane proteins (YxeN) and a solute-binding protein (YxeM).

It localises to the cell membrane. In terms of biological role, probably part of the ABC transporter complex YxeMNO that could be involved in amino-acid import. May transport S-methylcysteine. Probably responsible for the translocation of the substrate across the membrane. The sequence is that of Probable amino-acid permease protein YxeN (yxeN) from Bacillus subtilis (strain 168).